A 296-amino-acid chain; its full sequence is Thymidylate synthase (296 aa).

DUMP contacts are provided by residues Arg-23 and 157–158 (RR). The active-site Nucleophile is Cys-177. DUMP is bound by residues 198 to 201 (RSAD), Asn-209, and 239 to 241 (HIY). Asp-201 is a binding site for (6R)-5,10-methylene-5,6,7,8-tetrahydrofolate. Ala-295 lines the (6R)-5,10-methylene-5,6,7,8-tetrahydrofolate pocket.

Belongs to the thymidylate synthase family. Bacterial-type ThyA subfamily. In terms of assembly, homodimer.

The protein localises to the cytoplasm. The enzyme catalyses dUMP + (6R)-5,10-methylene-5,6,7,8-tetrahydrofolate = 7,8-dihydrofolate + dTMP. It functions in the pathway pyrimidine metabolism; dTTP biosynthesis. In terms of biological role, catalyzes the reductive methylation of 2'-deoxyuridine-5'-monophosphate (dUMP) to 2'-deoxythymidine-5'-monophosphate (dTMP) while utilizing 5,10-methylenetetrahydrofolate (mTHF) as the methyl donor and reductant in the reaction, yielding dihydrofolate (DHF) as a by-product. This enzymatic reaction provides an intracellular de novo source of dTMP, an essential precursor for DNA biosynthesis. The chain is Thymidylate synthase from Zymomonas mobilis subsp. mobilis (strain ATCC 31821 / ZM4 / CP4).